A 257-amino-acid chain; its full sequence is tRNA pseudouridine synthase A (257 aa).

Residue Asp52 is the Nucleophile of the active site. Residue Tyr111 participates in substrate binding.

This sequence belongs to the tRNA pseudouridine synthase TruA family. Homodimer.

It catalyses the reaction uridine(38/39/40) in tRNA = pseudouridine(38/39/40) in tRNA. In terms of biological role, formation of pseudouridine at positions 38, 39 and 40 in the anticodon stem and loop of transfer RNAs. The protein is tRNA pseudouridine synthase A of Dinoroseobacter shibae (strain DSM 16493 / NCIMB 14021 / DFL 12).